We begin with the raw amino-acid sequence, 278 residues long: Shikimate dehydrogenase (NADP(+)) (278 aa).

Shikimate contacts are provided by residues 19–21 and T66; that span reads SFS. The Proton acceptor role is filled by K70. Shikimate is bound by residues N91 and D106. Residues 130 to 134 and L222 contribute to the NADP(+) site; that span reads GSGGA. Y224 lines the shikimate pocket. An NADP(+)-binding site is contributed by G245.

The protein belongs to the shikimate dehydrogenase family. In terms of assembly, homodimer.

The catalysed reaction is shikimate + NADP(+) = 3-dehydroshikimate + NADPH + H(+). Its pathway is metabolic intermediate biosynthesis; chorismate biosynthesis; chorismate from D-erythrose 4-phosphate and phosphoenolpyruvate: step 4/7. Its function is as follows. Involved in the biosynthesis of the chorismate, which leads to the biosynthesis of aromatic amino acids. Catalyzes the reversible NADPH linked reduction of 3-dehydroshikimate (DHSA) to yield shikimate (SA). The chain is Shikimate dehydrogenase (NADP(+)) from Methanococcus maripaludis (strain DSM 14266 / JCM 13030 / NBRC 101832 / S2 / LL).